Here is a 371-residue protein sequence, read N- to C-terminus: NADP-dependent oxidoreductase lnaE (371 aa).

NADP(+)-binding positions include 172–175, Lys-198, Tyr-214, Asn-237, 277–283, and 307–309; these read DEIG, YGTIAEQ, and FGL.

The protein belongs to the NADP-dependent oxidoreductase L4BD family.

It participates in secondary metabolite biosynthesis. NADP-dependent oxidoreductase; part of the lna gene cluster that mediates the biosynthesis of diastereomeric piperazines. Lna and lnb clusters encode sets of enzymes that produce overlapping sets of previously undescribed metabolites such as piperazinomycin-like metabolites or morpholine. The lna and lnb biosynthetic pathways appear to be part of a signaling network that controls the formation of sclerotia, a resilient overwintering structure. One primary function of the non-canonical nonribosomal peptide synthetases lnaA and lnbA consists in the reduction of L-tyrosine. The presence in the clusters of tailoring enzymes such as the oxidoreductases lnaB, lnbB, lnaE or lnbE, as well as of the cytochrome P450 monooxygenases lnaC, lnaD, or lnbC, might explain formation of various diastereomeric piperazines. The protein is NADP-dependent oxidoreductase lnaE of Aspergillus flavus (strain ATCC 200026 / FGSC A1120 / IAM 13836 / NRRL 3357 / JCM 12722 / SRRC 167).